Here is a 382-residue protein sequence, read N- to C-terminus: uncharacterized protein (382 aa).

Transmembrane regions (helical) follow at residues 14–34 (GLLL…LWLA), 45–65 (VVSS…GYVI), 79–99 (FIFA…SWLA), 102–122 (FVAG…LMCS), 131–151 (LLAA…LLVS), 157–177 (LMSV…PLLF), 204–224 (LGVN…GLMP), 235–255 (ASIG…QWPI), 270–290 (VQVF…AMAP), 291–311 (ALFI…AWAC), 325–345 (ALLL…AMLM), and 348–368 (FSDN…LLML).

Belongs to the major facilitator superfamily. YcaD (TC 2.A.1.26) family.

Its subcellular location is the cell inner membrane. This is an uncharacterized protein from Escherichia coli O45:K1 (strain S88 / ExPEC).